A 309-amino-acid chain; its full sequence is tRNA pseudouridine synthase B (309 aa).

The active-site Nucleophile is D45.

The protein belongs to the pseudouridine synthase TruB family. Type 1 subfamily.

It carries out the reaction uridine(55) in tRNA = pseudouridine(55) in tRNA. In terms of biological role, responsible for synthesis of pseudouridine from uracil-55 in the psi GC loop of transfer RNAs. This Oleidesulfovibrio alaskensis (strain ATCC BAA-1058 / DSM 17464 / G20) (Desulfovibrio alaskensis) protein is tRNA pseudouridine synthase B.